The following is a 67-amino-acid chain: Conotoxin Cl6.8 (67 aa).

An N-terminal signal peptide occupies residues 1-22 (MKVTAVLMVAVLVLTACQLTTA). Residues 23 to 39 (NTTDYVRRILARKSTMS) constitute a propeptide that is removed on maturation. 3 cysteine pairs are disulfide-bonded: Cys-43/Cys-58, Cys-50/Cys-62, and Cys-57/Cys-66. Cys-66 is modified (cysteine amide).

Belongs to the conotoxin O1 superfamily. As to expression, expressed by the venom duct.

The protein localises to the secreted. The polypeptide is Conotoxin Cl6.8 (Californiconus californicus (California cone)).